The sequence spans 289 residues: Acetyl-coenzyme A carboxylase carboxyl transferase subunit beta (289 aa).

A CoA carboxyltransferase N-terminal domain is found at 30 to 289; the sequence is IWRECPRCHS…SNAWRANHDK (260 aa). Zn(2+) contacts are provided by C34, C37, C52, and C55. The C4-type zinc finger occupies 34–55; it reads CPRCHSRFYYRRFGNFDVCPEC.

Belongs to the AccD/PCCB family. Acetyl-CoA carboxylase is a heterohexamer composed of biotin carboxyl carrier protein (AccB), biotin carboxylase (AccC) and two subunits each of ACCase subunit alpha (AccA) and ACCase subunit beta (AccD). Zn(2+) is required as a cofactor.

It localises to the cytoplasm. It carries out the reaction N(6)-carboxybiotinyl-L-lysyl-[protein] + acetyl-CoA = N(6)-biotinyl-L-lysyl-[protein] + malonyl-CoA. The protein operates within lipid metabolism; malonyl-CoA biosynthesis; malonyl-CoA from acetyl-CoA: step 1/1. Functionally, component of the acetyl coenzyme A carboxylase (ACC) complex. Biotin carboxylase (BC) catalyzes the carboxylation of biotin on its carrier protein (BCCP) and then the CO(2) group is transferred by the transcarboxylase to acetyl-CoA to form malonyl-CoA. The chain is Acetyl-coenzyme A carboxylase carboxyl transferase subunit beta from Oenococcus oeni (strain ATCC BAA-331 / PSU-1).